The following is a 359-amino-acid chain: Protein RecA (359 aa).

ATP is bound at residue 77-84; that stretch reads GPESSGKT.

This sequence belongs to the RecA family.

The protein resides in the cytoplasm. Its function is as follows. Can catalyze the hydrolysis of ATP in the presence of single-stranded DNA, the ATP-dependent uptake of single-stranded DNA by duplex DNA, and the ATP-dependent hybridization of homologous single-stranded DNAs. It interacts with LexA causing its activation and leading to its autocatalytic cleavage. The chain is Protein RecA from Paramagnetospirillum magneticum (strain ATCC 700264 / AMB-1) (Magnetospirillum magneticum).